A 401-amino-acid polypeptide reads, in one-letter code: Multidrug resistance protein MdtH (401 aa).

The next 11 membrane-spanning stretches (helical) occupy residues 13-33, 34-54, 88-108, 139-159, 164-184, 211-231, 248-268, 275-295, 298-318, 341-361, and 366-386; these read YFLI…FPLI, SIHF…ALGL, IGFI…ACIL, ILML…SWLL, FQLV…FNAW, FIIY…VMLM, YIYI…TYWM, ETRL…IGSV, LYEL…AEPA, LSLA…YDLG, and FYQL…LILY.

It belongs to the major facilitator superfamily. DHA1 family. MdtH (TC 2.A.1.2.21) subfamily.

Its subcellular location is the cell inner membrane. The polypeptide is Multidrug resistance protein MdtH (Blochmanniella floridana).